The primary structure comprises 294 residues: Melanocortin receptor 5 (294 aa).

Residues 1–29 are Extracellular-facing; that stretch reads FLDLQLNATEGNVSGPSVGNTSSPCEDMG. Asparagine 7, asparagine 12, and asparagine 20 each carry an N-linked (GlcNAc...) asparagine glycan. The chain crosses the membrane as a helical span at residues 30 to 53; the sequence is IEVEVFLTLGLISLLENILVIGAI. The Cytoplasmic portion of the chain corresponds to 54–65; that stretch reads ARNKNLHVPMYF. The chain crosses the membrane as a helical span at residues 66 to 89; it reads FVCSLAVADMLVSLSNSWETITIY. The Extracellular segment spans residues 90–106; that stretch reads LIANKHLVLSDTSVRHL. A helical membrane pass occupies residues 107 to 130; sequence DNVFDSMICISLVASMCSLLAVAV. Residues 131–147 are Cytoplasmic-facing; that stretch reads DRYVTIFYALRYQHLMT. Residues 148-171 traverse the membrane as a helical segment; sequence GRRCGAIIAGIWALCTGCGPVFIV. The Extracellular portion of the chain corresponds to 172–178; it reads YYESTYV. Residues 179 to 203 traverse the membrane as a helical segment; it reads VVCLVAMFLTMLLLMASLYAHMFLQ. Residues 204–231 lie on the Cytoplasmic side of the membrane; that stretch reads ARAHVRRIAALPGYRSARQRTSMKGAVT. A helical transmembrane segment spans residues 232–257; it reads LAMLLGVFIVCWAPFFLHLILMISCP. At 258–265 the chain is on the extracellular side; that stretch reads QNLYCSCF. Residues 266-289 traverse the membrane as a helical segment; it reads MSHFNMYLILIMCNSVIDPLIYAF. At 290–294 the chain is on the cytoplasmic side; sequence RSQEK.

This sequence belongs to the G-protein coupled receptor 1 family.

It localises to the cell membrane. Functionally, receptor for MSH (alpha, beta and gamma) and ACTH. The activity of this receptor is mediated by G proteins which activate adenylate cyclase. This receptor is a possible mediator of the immunomodulation properties of melanocortins. This is Melanocortin receptor 5 (MC5R) from Sus scrofa (Pig).